The chain runs to 333 residues: D-2-hydroxyacid dehydrogenase (NAD+) (333 aa).

Tyr100 is a 4-methyl-2-oxopentanoate binding site. 8 residues coordinate NAD(+): His155, Ile156, Asp175, Val205, Asn211, Thr232, Arg234, and Asp258. Arg234 is an active-site residue. Glu263 is an active-site residue. 4-methyl-2-oxopentanoate is bound at residue His295. The Proton donor role is filled by His295.

The protein belongs to the D-isomer specific 2-hydroxyacid dehydrogenase family. As to quaternary structure, homodimer.

It catalyses the reaction a (2R)-2-hydroxycarboxylate + NAD(+) = a 2-oxocarboxylate + NADH + H(+). It carries out the reaction (2R)-hydroxy-4-methylpentanoate + NAD(+) = 4-methyl-2-oxopentanoate + NADH + H(+). The enzyme catalyses (R)-3-phenyllactate + NAD(+) = 3-phenylpyruvate + NADH + H(+). With respect to regulation, completely inhibited In the presence of 0.1 mM Hg(2+). No influence on the activity could be detected with Mg(2+) and Ca(2+) and only very weak effects with Cd(2+), Co(2+) and Mn(2+). Reducing agents and thiol group reagents do not affect catalytic activity. Catalyzes the NADH-dependent reversible reduction of various 2-ketocarboxylic acids to the corresponding D-2-hydroxycarboxylic acids. In vitro can use various substrates, including 4-methyl-2-oxopentanoate (2-oxoisocaproate), 2-oxopentanoate, 2-oxohexanoate and phenylpyruvate. This Lacticaseibacillus paracasei (Lactobacillus paracasei) protein is D-2-hydroxyacid dehydrogenase (NAD+).